Reading from the N-terminus, the 32-residue chain is Cytochrome b6-f complex subunit 7 (32 aa).

The chain crosses the membrane as a helical span at residues Ala-9–Leu-27.

The protein belongs to the PetM family. The 4 large subunits of the cytochrome b6-f complex are cytochrome b6, subunit IV (17 kDa polypeptide, PetD), cytochrome f and the Rieske protein, while the 4 small subunits are PetG, PetL, PetM and PetN. The complex functions as a dimer.

Its subcellular location is the cellular thylakoid membrane. Component of the cytochrome b6-f complex, which mediates electron transfer between photosystem II (PSII) and photosystem I (PSI), cyclic electron flow around PSI, and state transitions. The sequence is that of Cytochrome b6-f complex subunit 7 from Prochlorococcus marinus (strain MIT 9301).